Here is a 277-residue protein sequence, read N- to C-terminus: Undecaprenyl-diphosphatase 1 (277 aa).

7 consecutive transmembrane segments (helical) span residues 46-66 (VVGFSAVIQVGAIAAVLVYFF), 95-115 (WWVIYATIPIVIVGLAAKSLI), 119-139 (LASLWVVAASLIVGSGVMWAA), 165-185 (ILALLFPGFSRSGATMSTALI), 191-211 (VAATRLSFFLGIPALTGAGLY), 216-236 (ALGTGVGVAPLAVGTIVSFVV), and 256-276 (FVIYRIVIGVLLLGLLGTGVL).

The protein belongs to the UppP family.

It localises to the cell membrane. It carries out the reaction di-trans,octa-cis-undecaprenyl diphosphate + H2O = di-trans,octa-cis-undecaprenyl phosphate + phosphate + H(+). Its function is as follows. Catalyzes the dephosphorylation of undecaprenyl diphosphate (UPP). Confers resistance to bacitracin. The protein is Undecaprenyl-diphosphatase 1 of Streptomyces avermitilis (strain ATCC 31267 / DSM 46492 / JCM 5070 / NBRC 14893 / NCIMB 12804 / NRRL 8165 / MA-4680).